Here is a 207-residue protein sequence, read N- to C-terminus: Ribosomal RNA small subunit methyltransferase G (207 aa).

Residues glycine 73, leucine 78, 124–125 (VE), and arginine 139 contribute to the S-adenosyl-L-methionine site.

This sequence belongs to the methyltransferase superfamily. RNA methyltransferase RsmG family.

The protein resides in the cytoplasm. The catalysed reaction is guanosine(527) in 16S rRNA + S-adenosyl-L-methionine = N(7)-methylguanosine(527) in 16S rRNA + S-adenosyl-L-homocysteine. Specifically methylates the N7 position of guanine in position 527 of 16S rRNA. The chain is Ribosomal RNA small subunit methyltransferase G from Salmonella schwarzengrund (strain CVM19633).